A 147-amino-acid chain; its full sequence is Large ribosomal subunit protein uL13 (147 aa).

The segment at 127 to 147 is disordered; sequence GPEHPHSAQQPKVLEIQGAAR.

This sequence belongs to the universal ribosomal protein uL13 family. Part of the 50S ribosomal subunit.

This protein is one of the early assembly proteins of the 50S ribosomal subunit, although it is not seen to bind rRNA by itself. It is important during the early stages of 50S assembly. The chain is Large ribosomal subunit protein uL13 from Verminephrobacter eiseniae (strain EF01-2).